Consider the following 420-residue polypeptide: 26S proteasome non-ATPase regulatory subunit 4 (420 aa).

A VWFA domain is found at 1 to 174; sequence MSQEATIIAV…TGSHLISVAP (174 aa). UIM domains follow at residues 210–229, 255–274, and 288–307; these read AEDPDLLYALRVSMEDQRMR, SEEAMLQQALAMSMQMNNTE, and SEEDQIAYALRMSLQQMGEE. A disordered region spans residues 392–420; that stretch reads RKAINALTKSQSQRGSKKDEKEDEDKQNS. The segment covering 407 to 420 has biased composition (basic and acidic residues); that stretch reads SKKDEKEDEDKQNS.

Belongs to the proteasome subunit S5A family. In terms of assembly, the 26S proteasome is composed of a core protease, known as the 20S proteasome, capped at one or both ends by the 19S regulatory complex (RC). The RC is composed of at least 18 different subunits in two subcomplexes, the base and the lid, which form the portions proximal and distal to the 20S proteolytic core, respectively.

In terms of biological role, binds and presumably selects ubiquitin-conjugates for destruction. The chain is 26S proteasome non-ATPase regulatory subunit 4 from Schistosoma mansoni (Blood fluke).